Consider the following 349-residue polypeptide: tRNA-specific 2-thiouridylase MnmA (349 aa).

ATP-binding positions include 7 to 14 (GLSGGVDS) and Leu33. Cys94 acts as the Nucleophile in catalysis. The cysteines at positions 94 and 193 are disulfide-linked. Gly119 provides a ligand contact to ATP. The segment at 143–145 (KDQ) is interaction with tRNA. The active-site Cysteine persulfide intermediate is Cys193. The interaction with tRNA stretch occupies residues 298-299 (RY).

Belongs to the MnmA/TRMU family.

It localises to the cytoplasm. The enzyme catalyses S-sulfanyl-L-cysteinyl-[protein] + uridine(34) in tRNA + AH2 + ATP = 2-thiouridine(34) in tRNA + L-cysteinyl-[protein] + A + AMP + diphosphate + H(+). Functionally, catalyzes the 2-thiolation of uridine at the wobble position (U34) of tRNA, leading to the formation of s(2)U34. This chain is tRNA-specific 2-thiouridylase MnmA, found in Rippkaea orientalis (strain PCC 8801 / RF-1) (Cyanothece sp. (strain PCC 8801)).